A 418-amino-acid chain; its full sequence is Glutamyl-tRNA reductase (418 aa).

Substrate-binding positions include 49-52 (TCNR), Ser-109, 114-116 (EPQ), and Gln-120. Residue Cys-50 is the Nucleophile of the active site. 189 to 194 (GAGETI) contributes to the NADP(+) binding site.

This sequence belongs to the glutamyl-tRNA reductase family. As to quaternary structure, homodimer.

It catalyses the reaction (S)-4-amino-5-oxopentanoate + tRNA(Glu) + NADP(+) = L-glutamyl-tRNA(Glu) + NADPH + H(+). It participates in porphyrin-containing compound metabolism; protoporphyrin-IX biosynthesis; 5-aminolevulinate from L-glutamyl-tRNA(Glu): step 1/2. Catalyzes the NADPH-dependent reduction of glutamyl-tRNA(Glu) to glutamate 1-semialdehyde (GSA). In Citrobacter koseri (strain ATCC BAA-895 / CDC 4225-83 / SGSC4696), this protein is Glutamyl-tRNA reductase.